The primary structure comprises 168 residues: MPLRPGRCYRHFGTPPYTRLEYIKSNPPVLIPKFDLGNPKGNFNTVLKLVVMRPGQIRANALEAARQHANKYLTAKVGEANFFLRVAVFPHHILRENKMMAMAGADRLQDGMRLSFGTPVGRAARVEAGQIVMLVKVDAKNIDHAKEALRRAASKIPLPSRIIVEQAQ.

It belongs to the universal ribosomal protein uL16 family.

The chain is Large ribosomal subunit protein uL16 from Thermofilum pendens (strain DSM 2475 / Hrk 5).